Reading from the N-terminus, the 198-residue chain is Putative NADH dehydrogenase/NAD(P)H nitroreductase XOO4267 (198 aa).

The protein belongs to the nitroreductase family. HadB/RutE subfamily. It depends on FMN as a cofactor.

The protein is Putative NADH dehydrogenase/NAD(P)H nitroreductase XOO4267 of Xanthomonas oryzae pv. oryzae (strain KACC10331 / KXO85).